The following is a 148-amino-acid chain: uncharacterized protein (148 aa).

The segment covering V65–D79 has biased composition (low complexity). The disordered stretch occupies residues V65–G85.

This is an uncharacterized protein from Saccharomyces cerevisiae (strain ATCC 204508 / S288c) (Baker's yeast).